The primary structure comprises 276 residues: Large ribosomal subunit protein uL2c (276 aa).

Residues 225-276 are disordered; it reads AMNPVDHPHGGGEGRTPIGRKKPVTPWGYSALGKKSRKRNRYSDASILRRRE.

Belongs to the universal ribosomal protein uL2 family. As to quaternary structure, part of the 50S ribosomal subunit.

The protein resides in the plastid. It localises to the chloroplast. The protein is Large ribosomal subunit protein uL2c (rpl2) of Pinus koraiensis (Korean pine).